The primary structure comprises 178 residues: ATP synthase subunit delta (178 aa).

Belongs to the ATPase delta chain family. As to quaternary structure, F-type ATPases have 2 components, F(1) - the catalytic core - and F(0) - the membrane proton channel. F(1) has five subunits: alpha(3), beta(3), gamma(1), delta(1), epsilon(1). F(0) has three main subunits: a(1), b(2) and c(10-14). The alpha and beta chains form an alternating ring which encloses part of the gamma chain. F(1) is attached to F(0) by a central stalk formed by the gamma and epsilon chains, while a peripheral stalk is formed by the delta and b chains.

Its subcellular location is the cell membrane. In terms of biological role, f(1)F(0) ATP synthase produces ATP from ADP in the presence of a proton or sodium gradient. F-type ATPases consist of two structural domains, F(1) containing the extramembraneous catalytic core and F(0) containing the membrane proton channel, linked together by a central stalk and a peripheral stalk. During catalysis, ATP synthesis in the catalytic domain of F(1) is coupled via a rotary mechanism of the central stalk subunits to proton translocation. This protein is part of the stalk that links CF(0) to CF(1). It either transmits conformational changes from CF(0) to CF(1) or is implicated in proton conduction. The chain is ATP synthase subunit delta from Moorella thermoacetica (strain ATCC 39073 / JCM 9320).